The primary structure comprises 660 residues: Leucine-rich repeat transmembrane protein FLRT2 (660 aa).

Residues 1–35 (MGLQTTKWPSHGAFFLKSWLIISLGLYSQVSKLLA) form the signal peptide. 2 disulfide bridges follow: C36–C42 and C40–C49. Positions 36–63 (CPSVCRCDRNFVYCNERSLTSVPLGIPE) constitute an LRRNT domain. Residues 36–541 (CPSVCRCDRN…TTSHSMGSPF (506 aa)) are Extracellular-facing. LRR repeat units follow at residues 64–85 (GVTV…AELH), 89–109 (SVHT…NLPK), 110–131 (NVRV…ALAQ), 134–155 (KLEE…DGAF), 160–181 (SLKL…LPVD), 182–202 (LQEL…AFQN), 205–225 (SLER…AEGT), 231–252 (KLKE…LPGT), 253–274 (HLIR…AFSN), and 277–298 (KLER…VFDN). N-linked (GlcNAc...) asparagine glycosylation is present at N202. N-linked (GlcNAc...) asparagine glycosylation is present at N298. Positions 310-362 (NPWFCDCSIKWVTEWLKYIPSSLNVRGFMCQGPEQVRGMAVRELNMNLLSCPT) constitute an LRRCT domain. 2 disulfides stabilise this stretch: C314-C339 and C316-C360. Residues 373 to 409 (APSTASPTTQPPTLSIPNPSRSYTPPTPTTSKLPTIP) are compositionally biased toward low complexity. The interval 373–413 (APSTASPTTQPPTLSIPNPSRSYTPPTPTTSKLPTIPDWDG) is disordered. Positions 419–517 (PPISERIQLS…ICSEATTHAS (99 aa)) constitute a Fibronectin type-III domain. 2 N-linked (GlcNAc...) asparagine glycosylation sites follow: N433 and N521. The chain crosses the membrane as a helical span at residues 542–562 (LLAGLIGGAVIFVLVVLLSVF). Residues 563–660 (CWHMHKKGRY…SVPDLEHCHT (98 aa)) lie on the Cytoplasmic side of the membrane.

Self-associates (via leucine-rich repeats), giving rise to homooligomers. Interacts with FGFR1. Interacts with FGFR2. Interacts (via extracellular domain) with ADGRL1/LPHN1. Interacts (via extracellular domain) with ADGRL3 (via olfactomedin-like domain). Interacts (via extracellular domain) with UNC5D (via the first Ig-like domain). Can also interact (via extracellular domain) with UNC5B, but with much lower affinity. Interacts (via extracellular domain) with FN1. In terms of processing, N-glycosylated. Post-translationally, proteolytic cleavage in the juxtamembrane region gives rise to a soluble ectodomain. Cleavage is probably effected by a metalloprotease. Expressed in pancreas, skeletal muscle, brain, and heart.

The protein localises to the cell membrane. Its subcellular location is the endoplasmic reticulum membrane. It localises to the cell junction. It is found in the focal adhesion. The protein resides in the secreted. The protein localises to the extracellular space. Its subcellular location is the extracellular matrix. It localises to the microsome membrane. It is found in the synapse. The protein resides in the synaptosome. In terms of biological role, functions in cell-cell adhesion, cell migration and axon guidance. Mediates cell-cell adhesion via its interactions with ADGRL3 and probably also other latrophilins that are expressed at the surface of adjacent cells. May play a role in the migration of cortical neurons during brain development via its interaction with UNC5D. Mediates axon growth cone collapse and plays a repulsive role in neuron guidance via its interaction with UNC5D, and possibly also other UNC-5 family members. Plays a role in fibroblast growth factor-mediated signaling cascades. Required for normal organization of the cardiac basement membrane during embryogenesis, and for normal embryonic epicardium and heart morphogenesis. The sequence is that of Leucine-rich repeat transmembrane protein FLRT2 (FLRT2) from Homo sapiens (Human).